A 311-amino-acid chain; its full sequence is MAEKYPLQAGDPCVTLTEEDIWDVERLCLEELRVLLVSHLKSHKHLDHLRAKKILSREDAEEVSSRATSRSRAGLLVDMCQDHPRGFQCLKESCKNEVGQEHLVDLLERAFEKHCGDKLTQKWWESGADGRNPRRPPGSEDNSGYTALLPTNPSGGGPSIGSGHSRPRGRDDSGGIGGGVYPFSHGGARVVGGGWGGWGESGGAGRGGSLLSGGHGGHPPHGGPGGGGRDYYGGGGSGYYESIPEPANFPNSGGGGRGGGVRYDAGGDGRLGGLPPDPQEVDDPSLSVQGRGGPAPDPPSPPLRTRRFFCC.

In terms of domain architecture, CARD spans 21–110; sequence IWDVERLCLE…EHLVDLLERA (90 aa). 3 disordered regions span residues 125 to 181, 203 to 230, and 243 to 311; these read ESGA…GGVY, GAGRGGSLLSGGHGGHPPHGGPGGGGRD, and IPEP…FFCC. The segment covering 140–152 has biased composition (polar residues); sequence EDNSGYTALLPTN. The span at 252–272 shows a compositional bias: gly residues; it reads SGGGGRGGGVRYDAGGDGRLG.

The protein localises to the host cell membrane. In terms of biological role, activates host NF-kappa-B and JNK pathways. Induces hyperphosphorylation and redistribution of host bcl-10 from the cytoplasm to the plasma membrane. The inhibitory effect of cellular bcl-10 on NF-kappa-B pathway is then overcome allowing NF-kappa-B activation. This Equus caballus (Horse) protein is CARD domain-containing protein E10 (E10).